The chain runs to 784 residues: Ribosome biogenesis protein BOP1 homolog (784 aa).

Residues 1-11 (MTKKLALKRRG) are compositionally biased toward basic residues. Residues 1 to 159 (MTKKLALKRR…DSDTSDEEDI (159 aa)) are disordered. Acidic residues-rich tracts occupy residues 27–36 (SENEEEEEDL), 45–54 (EDSTDDEGID), 62–73 (SEELQFESDEEG), and 84–111 (AEEDEESSDEEDNEEEESTDGEEVEDEE). Basic and acidic residues-rich tracts occupy residues 112 to 123 (KDSKSKQTDDKP) and 138 to 148 (LPKRDSSKPEY). Acidic residues predominate over residues 149–158 (QDSDTSDEED). 7 WD repeats span residues 445-486 (GHTD…RTIE), 488-526 (DEVVRCVAWCPNPKLSIIAVATGNRLLLVNPKVGDKVLV), 570-612 (THFK…SQIP), 615-653 (KSKGLIQFVLFHPVKPCFFVATQHNIRIYDLVKQELVKK), 656-695 (TNSKWISGMSIHPKGDNLLVSTYDKKMLWFDLDLSTKPYQ), 699-738 (LHRNAVRSVAFHLRYPLFASGSDDQAVIVSHGMVYNDLLQ), and 754-784 (RDEFGVLDVNWHPVQPWVFSTGADSTIRLYT).

This sequence belongs to the WD repeat BOP1/ERB1 family.

Its subcellular location is the nucleus. The protein resides in the nucleolus. It localises to the nucleoplasm. Functionally, required for maturation of ribosomal RNAs and formation of the large ribosomal subunit. The chain is Ribosome biogenesis protein BOP1 homolog from Drosophila melanogaster (Fruit fly).